A 279-amino-acid polypeptide reads, in one-letter code: Plasmodesmata-located protein 8 (279 aa).

The signal sequence occupies residues 1–20 (MRRLFLFSLLFLFFYSSSSS). The Extracellular portion of the chain corresponds to 21-253 (RSSSESHIFI…PTNGDHVGKS (233 aa)). 2 Gnk2-homologous domains span residues 27–135 (HIFI…TNDF) and 137–237 (GKPD…GSGY). 6 disulfides stabilise this stretch: Cys-34-Cys-113, Cys-89-Cys-98, Cys-101-Cys-126, Cys-148-Cys-215, Cys-191-Cys-200, and Cys-203-Cys-228. The helical transmembrane segment at 254–274 (IAIIVGVIAGFAILVVLLSLC) threads the bilayer. The interval 254 to 274 (IAIIVGVIAGFAILVVLLSLC) is necessary and sufficient for plasmodesmal targeting. Topologically, residues 275 to 279 (RNSMH) are cytoplasmic.

It belongs to the cysteine-rich repeat secretory protein family. Plasmodesmata-located proteins (PDLD) subfamily. As to quaternary structure, interacts with ACBP6; interaction occurs at the plasma membrane. (Microbial infection) Interacts with Grapevine fanleaf virus (GFLV) 2B-MP. In terms of tissue distribution, highly expressed in pollen, lateral root and elongation zone. Higher expression in the reproductive tissues (flowers and buds) than in vegetative organs (leaves and stems). High expression in shoot and root phloem companion cells (at protein level).

Its subcellular location is the cell membrane. The protein resides in the cell junction. It is found in the plasmodesma. Modulates cell-to-cell trafficking. In Arabidopsis thaliana (Mouse-ear cress), this protein is Plasmodesmata-located protein 8.